Consider the following 200-residue polypeptide: MRTLDKRIAPNVKLAASLVARAPTLTLAFDARCKSRVAATLDTGEDVAVLLPRGTVLRDGDVLVADDGALVRIVAAPETVLLVRAHDPLTLMRAAYHLGNRHTPVEIGDGYLKLEADPVLADMLRRLGTQVDETQAPFQPEAGAYGGGHKHGHDATFAEDYALAQQVFGEHHGHAHPHPHDHDHQHGPGCAHGRHGHDHH.

Residues 171 to 200 (HHGHAHPHPHDHDHQHGPGCAHGRHGHDHH) form a disordered region.

The protein belongs to the UreE family.

The protein resides in the cytoplasm. Functionally, involved in urease metallocenter assembly. Binds nickel. Probably functions as a nickel donor during metallocenter assembly. The chain is Urease accessory protein UreE from Burkholderia vietnamiensis (strain G4 / LMG 22486) (Burkholderia cepacia (strain R1808)).